The sequence spans 569 residues: Urease subunit alpha (569 aa).

One can recognise a Urease domain in the interval 131-569 (GGIDAHIHWI…LPLAQRYFLF (439 aa)). Positions 136, 138, and 219 each coordinate Ni(2+). An N6-carboxylysine modification is found at Lys219. A substrate-binding site is contributed by His221. Positions 248 and 274 each coordinate Ni(2+). His322 acts as the Proton donor in catalysis. Asp362 contributes to the Ni(2+) binding site.

The protein belongs to the metallo-dependent hydrolases superfamily. Urease alpha subunit family. As to quaternary structure, heterotrimer of UreA (gamma), UreB (beta) and UreC (alpha) subunits. Three heterotrimers associate to form the active enzyme. Ni cation serves as cofactor. In terms of processing, carboxylation allows a single lysine to coordinate two nickel ions.

The protein localises to the cytoplasm. It catalyses the reaction urea + 2 H2O + H(+) = hydrogencarbonate + 2 NH4(+). The protein operates within nitrogen metabolism; urea degradation; CO(2) and NH(3) from urea (urease route): step 1/1. The sequence is that of Urease subunit alpha from Magnetococcus marinus (strain ATCC BAA-1437 / JCM 17883 / MC-1).